Reading from the N-terminus, the 538-residue chain is Protein phosphatase EYA2 (538 aa).

Polar residues predominate over residues 209 to 230; the sequence is HNVPNQSSESLAGEYNTHNGPS. Residues 209–263 are disordered; it reads HNVPNQSSESLAGEYNTHNGPSTPAKEGDTDRPHRASDGKLRGRSKRSSDPSPAG. Over residues 234–249 the composition is skewed to basic and acidic residues; it reads KEGDTDRPHRASDGKL. Aspartate 274 (nucleophile) is an active-site residue. The Mg(2+) site is built by aspartate 274, aspartate 276, and aspartate 502. Catalysis depends on aspartate 276, which acts as the Proton donor.

Belongs to the HAD-like hydrolase superfamily. EYA family. Interacts with DACH2 and SIX1, and probably with SIX2, SIX4 and SIX5. Interacts with CAPN8. Interacts with GNAZ and GNAI2; this precludes interaction with SIX1. Mg(2+) is required as a cofactor. In terms of tissue distribution, highest expression in muscle with lower levels in kidney, placenta, pancreas, brain and heart.

It localises to the cytoplasm. Its subcellular location is the nucleus. The enzyme catalyses O-phospho-L-tyrosyl-[protein] + H2O = L-tyrosyl-[protein] + phosphate. Functionally, functions both as protein phosphatase and as transcriptional coactivator for SIX1, and probably also for SIX2, SIX4 and SIX5. Tyrosine phosphatase that dephosphorylates 'Tyr-142' of histone H2AX (H2AXY142ph) and promotes efficient DNA repair via the recruitment of DNA repair complexes containing MDC1. 'Tyr-142' phosphorylation of histone H2AX plays a central role in DNA repair and acts as a mark that distinguishes between apoptotic and repair responses to genotoxic stress. Its function as histone phosphatase may contribute to its function in transcription regulation during organogenesis. Plays an important role in hypaxial muscle development together with SIX1 and DACH2; in this it is functionally redundant with EYA1. The sequence is that of Protein phosphatase EYA2 (EYA2) from Homo sapiens (Human).